The primary structure comprises 647 residues: DNA mismatch repair protein MutL (647 aa).

The segment at 377–396 (EEPQAVKQSAQLWQPPKQEW) is disordered. A compositionally biased stretch (low complexity) spans 387-396 (QLWQPPKQEW).

The protein belongs to the DNA mismatch repair MutL/HexB family.

In terms of biological role, this protein is involved in the repair of mismatches in DNA. It is required for dam-dependent methyl-directed DNA mismatch repair. May act as a 'molecular matchmaker', a protein that promotes the formation of a stable complex between two or more DNA-binding proteins in an ATP-dependent manner without itself being part of a final effector complex. The protein is DNA mismatch repair protein MutL of Bacillus cereus (strain AH187).